Reading from the N-terminus, the 427-residue chain is Glutamate-1-semialdehyde 2,1-aminomutase (427 aa).

The residue at position 265 (K265) is an N6-(pyridoxal phosphate)lysine.

This sequence belongs to the class-III pyridoxal-phosphate-dependent aminotransferase family. HemL subfamily. As to quaternary structure, homodimer. It depends on pyridoxal 5'-phosphate as a cofactor.

Its subcellular location is the cytoplasm. It catalyses the reaction (S)-4-amino-5-oxopentanoate = 5-aminolevulinate. Its pathway is porphyrin-containing compound metabolism; protoporphyrin-IX biosynthesis; 5-aminolevulinate from L-glutamyl-tRNA(Glu): step 2/2. This chain is Glutamate-1-semialdehyde 2,1-aminomutase, found in Burkholderia orbicola (strain MC0-3).